Consider the following 170-residue polypeptide: Helix-loop-helix protein 3 (170 aa).

The span at 1 to 26 shows a compositional bias: low complexity; sequence MTASTSSTPSTSTKIPSSSKSSVTKQ. 2 disordered regions span residues 1–42 and 118–170; these read MTAS…VDQV and TPSP…TETY. A basic motif; degenerate region spans residues 26–39; it reads QTKQKRNERERKRV. A bHLH domain is found at 26–79; that stretch reads QTKQKRNERERKRVDQVNQGFVLLQERVPKAAGNKAKLSKVETLREAARYIQEL. Positions 30–40 are enriched in basic and acidic residues; sequence KRNERERKRVD. Residues 40–79 are helix-loop-helix motif; that stretch reads DQVNQGFVLLQERVPKAAGNKAKLSKVETLREAARYIQEL. The segment covering 143–157 has biased composition (low complexity); that stretch reads SHYYQESSSSSASTS.

As to quaternary structure, efficient DNA binding requires dimerization with another bHLH protein. Forms a heterodimer with hlh-2. In terms of tissue distribution, expressed in the ADL sensory neurons.

It is found in the nucleus. In terms of biological role, probable transcriptional regulator. May mediate transcriptional activation by binding to the E-box motif 5'-CANNTG-3'. Plays a role in the differentiation of the hermaphrodite-specific motor neurons (HSN) that are required for normal egg laying. Might play a role in serotonin production by regulating expression of the tryptophan hydrolase tph-1 which catalyzes serotonin synthesis, in the HSN neurons. Also plays a role in HSN axon guidance towards the vulva and the ventral nerve cord, possibly by promoting the expression of the netrin receptor unc-40. Under feeding conditions, involved in the regulation of the srh-234 chemoreceptor encoding gene expression in the ADL sensory neurons. Together with hlh-2, involved in the induction of programmed cell death in the sister cells of the serotonergic neurosecretory motor (NSM) neurons, probably through the activation of egl-1 transcription. The protein is Helix-loop-helix protein 3 of Caenorhabditis elegans.